The chain runs to 98 residues: Large ribosomal subunit protein uL23 (98 aa).

Belongs to the universal ribosomal protein uL23 family. Part of the 50S ribosomal subunit. Contacts protein L29, and trigger factor when it is bound to the ribosome.

One of the early assembly proteins it binds 23S rRNA. One of the proteins that surrounds the polypeptide exit tunnel on the outside of the ribosome. Forms the main docking site for trigger factor binding to the ribosome. The sequence is that of Large ribosomal subunit protein uL23 from Clostridium kluyveri (strain NBRC 12016).